The chain runs to 255 residues: Ribonuclease HII (255 aa).

The RNase H type-2 domain occupies Leu73–Leu255. Residues Asp79, Glu80, and Asp171 each contribute to the a divalent metal cation site.

It belongs to the RNase HII family. Mn(2+) serves as cofactor. It depends on Mg(2+) as a cofactor.

The protein resides in the cytoplasm. The catalysed reaction is Endonucleolytic cleavage to 5'-phosphomonoester.. Functionally, endonuclease that specifically degrades the RNA of RNA-DNA hybrids. In Clostridioides difficile (strain 630) (Peptoclostridium difficile), this protein is Ribonuclease HII.